The following is a 274-amino-acid chain: Glutamate racemase (274 aa).

Substrate is bound by residues 9 to 10 (DS) and 41 to 42 (YG). The active-site Proton donor/acceptor is Cys73. 74 to 75 (NT) serves as a coordination point for substrate. Cys183 (proton donor/acceptor) is an active-site residue. 184-185 (TH) is a substrate binding site.

It belongs to the aspartate/glutamate racemases family.

It carries out the reaction L-glutamate = D-glutamate. It functions in the pathway cell wall biogenesis; peptidoglycan biosynthesis. Provides the (R)-glutamate required for cell wall biosynthesis. This Shewanella baltica (strain OS195) protein is Glutamate racemase.